The primary structure comprises 495 residues: Protein adenylyltransferase Fic (495 aa).

Positions 1-23 are disordered; the sequence is MGTEAEPPSPPSPPAQQQEQANP. The helical transmembrane segment at 36 to 58 threads the bilayer; sequence LYRLVLFFIAGSLTAWMFHAFSS. TPR repeat units follow at residues 121–154 and 155–189; these read ALVS…APRH and PEVL…SPSN. The short motif at 246–251 is the Inhibitory (S/T)XXXE(G/N) motif element; that stretch reads SVGIEG. Residues glutamate 250 and 331–334 each bind ATP; that span reads VGGH. The Fido domain occupies 300–435; the sequence is ITIKDILELH…IRPFVRFIAD (136 aa). Histidine 378 is an active-site residue. ATP is bound by residues 382–389, 414–415, and asparagine 422; these read DGNGRTSR and YY.

It belongs to the fic family. In terms of assembly, homodimer.

It is found in the membrane. The enzyme catalyses L-tyrosyl-[protein] + ATP = O-(5'-adenylyl)-L-tyrosyl-[protein] + diphosphate. It catalyses the reaction L-threonyl-[protein] + ATP = 3-O-(5'-adenylyl)-L-threonyl-[protein] + diphosphate. The catalysed reaction is 3-O-(5'-adenylyl)-L-threonyl-[protein] + H2O = L-threonyl-[protein] + AMP + H(+). Its activity is regulated as follows. The side chain of Glu-250 determines which of the two opposing activities (AMPylase or de-AMPylase) will take place. In response to endoplasmic reticulum stress, mediates de-AMPylase activity. Adenylyltransferase activity is inhibited by the inhibitory helix present at the N-terminus: Glu-250 binds ATP and competes with ATP-binding at Arg-389, thereby preventing adenylyltransferase activity. In unstressed cells, disengagement of Glu-250 promotes adenylyltransferase activity. Activation dissociates ATP-binding from Glu-250, allowing ordered binding of the entire ATP moiety with the alpha-phosphate in an orientation that is productive for accepting an incoming target hydroxyl side chain. In terms of biological role, protein that can both mediate the addition of adenosine 5'-monophosphate (AMP) to specific residues of target proteins (AMPylation), and the removal of the same modification from target proteins (de-AMPylation), depending on the context. The side chain of Glu-250 determines which of the two opposing activities (AMPylase or de-AMPylase) will take place. Acts as a key regulator of the unfolded protein response (UPR) by mediating AMPylation or de-AMPylation of Hsc70-3/BiP. In unstressed cells, acts as an adenylyltransferase by mediating AMPylation of Hsc70-3/BiP at 'Thr-518', thereby inactivating it. In response to endoplasmic reticulum stress, acts as a phosphodiesterase by mediating removal of ATP (de-AMPylation) from Hsc70-3/BiP at 'Thr-518', leading to restore HSPA5/BiP activity. The protein is Protein adenylyltransferase Fic of Drosophila erecta (Fruit fly).